The sequence spans 123 residues: Small ribosomal subunit protein uS12 (123 aa).

At Asp89 the chain carries 3-methylthioaspartic acid.

This sequence belongs to the universal ribosomal protein uS12 family. In terms of assembly, part of the 30S ribosomal subunit. Contacts proteins S8 and S17. May interact with IF1 in the 30S initiation complex.

Functionally, with S4 and S5 plays an important role in translational accuracy. Interacts with and stabilizes bases of the 16S rRNA that are involved in tRNA selection in the A site and with the mRNA backbone. Located at the interface of the 30S and 50S subunits, it traverses the body of the 30S subunit contacting proteins on the other side and probably holding the rRNA structure together. The combined cluster of proteins S8, S12 and S17 appears to hold together the shoulder and platform of the 30S subunit. The protein is Small ribosomal subunit protein uS12 of Chelativorans sp. (strain BNC1).